A 334-amino-acid polypeptide reads, in one-letter code: Aspartate carbamoyltransferase catalytic subunit (334 aa).

Residues R71 and T72 each contribute to the carbamoyl phosphate site. L-aspartate is bound at residue K99. 3 residues coordinate carbamoyl phosphate: R121, H151, and Q154. L-aspartate is bound by residues R184 and R239. Carbamoyl phosphate-binding residues include G280 and P281.

The protein belongs to the aspartate/ornithine carbamoyltransferase superfamily. ATCase family. In terms of assembly, heterododecamer (2C3:3R2) of six catalytic PyrB chains organized as two trimers (C3), and six regulatory PyrI chains organized as three dimers (R2).

It carries out the reaction carbamoyl phosphate + L-aspartate = N-carbamoyl-L-aspartate + phosphate + H(+). The protein operates within pyrimidine metabolism; UMP biosynthesis via de novo pathway; (S)-dihydroorotate from bicarbonate: step 2/3. Functionally, catalyzes the condensation of carbamoyl phosphate and aspartate to form carbamoyl aspartate and inorganic phosphate, the committed step in the de novo pyrimidine nucleotide biosynthesis pathway. The sequence is that of Aspartate carbamoyltransferase catalytic subunit from Pseudomonas fluorescens (strain Pf0-1).